We begin with the raw amino-acid sequence, 258 residues long: NAD kinase (258 aa).

D51 (proton acceptor) is an active-site residue. NAD(+) is bound by residues 51–52, K56, 119–120, K130, D149, 160–165, and A184; these read DG, ND, and TAYSLS.

It belongs to the NAD kinase family. A divalent metal cation is required as a cofactor.

The protein localises to the cytoplasm. The enzyme catalyses NAD(+) + ATP = ADP + NADP(+) + H(+). In terms of biological role, involved in the regulation of the intracellular balance of NAD and NADP, and is a key enzyme in the biosynthesis of NADP. Catalyzes specifically the phosphorylation on 2'-hydroxyl of the adenosine moiety of NAD to yield NADP. The protein is NAD kinase of Thermotoga sp. (strain RQ2).